Reading from the N-terminus, the 168-residue chain is ATP synthase subunit d, mitochondrial (168 aa).

It belongs to the ATPase d subunit family. As to quaternary structure, F-type ATPases have 2 components, CF(1) - the catalytic core - and CF(0) - the membrane proton channel. CF(0) seems to have nine subunits: a, b, c, d, e, f, g, F6 and 8 (or A6L).

Its subcellular location is the mitochondrion. The protein localises to the mitochondrion inner membrane. Functionally, mitochondrial membrane ATP synthase (F(1)F(0) ATP synthase or Complex V) produces ATP from ADP in the presence of a proton gradient across the membrane which is generated by electron transport complexes of the respiratory chain. F-type ATPases consist of two structural domains, F(1) - containing the extramembraneous catalytic core, and F(0) - containing the membrane proton channel, linked together by a central stalk and a peripheral stalk. During catalysis, ATP synthesis in the catalytic domain of F(1) is coupled via a rotary mechanism of the central stalk subunits to proton translocation. Part of the complex F(0) domain and the peripheric stalk, which acts as a stator to hold the catalytic alpha(3)beta(3) subcomplex and subunit a/ATP6 static relative to the rotary elements. This Arabidopsis thaliana (Mouse-ear cress) protein is ATP synthase subunit d, mitochondrial.